A 317-amino-acid chain; its full sequence is Transaldolase 2 (317 aa).

Lys-132 acts as the Schiff-base intermediate with substrate in catalysis.

This sequence belongs to the transaldolase family. Type 1 subfamily. As to quaternary structure, homodimer.

It localises to the cytoplasm. The enzyme catalyses D-sedoheptulose 7-phosphate + D-glyceraldehyde 3-phosphate = D-erythrose 4-phosphate + beta-D-fructose 6-phosphate. It participates in carbohydrate degradation; pentose phosphate pathway; D-glyceraldehyde 3-phosphate and beta-D-fructose 6-phosphate from D-ribose 5-phosphate and D-xylulose 5-phosphate (non-oxidative stage): step 2/3. Transaldolase is important for the balance of metabolites in the pentose-phosphate pathway. This Pectobacterium atrosepticum (strain SCRI 1043 / ATCC BAA-672) (Erwinia carotovora subsp. atroseptica) protein is Transaldolase 2.